The chain runs to 468 residues: Efflux pump azaK (468 aa).

Residues 1 to 30 (MTVHPPAVADETSPLLPSQDGPGHNGIVPA) form a disordered region. 6 helical membrane passes run 43-65 (QVALLCCARAIDPLAFFTIFPFV), 80-100 (VGFYSGIIESLFSVTQMMLMI), 112-132 (KPVLILSLAGLSVSSALFGFS), 135-155 (LGQMVFFRCLAGTFGGTVVTV), 174-194 (YFSLANTIGTVIGPLLGGALC), and 207-227 (LPTVAAGAFGVTVTVACLMFV). N228 is a glycosylation site (N-linked (GlcNAc...) asparagine). The next 6 helical transmembrane spans lie at 257–277 (VLPVLYIHGHSMMLAFAYTAV), 296–316 (FYISLFLGGSGIAQTIWLVLV), 329–349 (ILRGLCFVWIIFLAATVGASV), 357–377 (VAFWILAPLALVLGSSVAMQL), 387–407 (VSPSPAALGTLNAMSLAIISF), and 429–449 (PGFYTFWLVLGGLVLVLAFTL).

It belongs to the major facilitator superfamily.

The protein resides in the cell membrane. In terms of biological role, efflux pump that might be required for efficient secretion of azaphilones. This chain is Efflux pump azaK, found in Aspergillus niger (strain ATCC 1015 / CBS 113.46 / FGSC A1144 / LSHB Ac4 / NCTC 3858a / NRRL 328 / USDA 3528.7).